Consider the following 307-residue polypeptide: Acyl transferase (307 aa).

Active-site charge relay system residues include Ser116, Asp213, and His243.

Belongs to the LuxD family.

The protein operates within lipid metabolism; fatty acid reduction for biolumincescence. Its function is as follows. Acyl transferase is part of the fatty acid reductase system required for aldehyde biosynthesis; it produces fatty acids for the luminescent reaction. The protein is Acyl transferase of Aliivibrio fischeri (strain MJ11) (Vibrio fischeri).